A 305-amino-acid polypeptide reads, in one-letter code: tRNA pseudouridine synthase B (305 aa).

The Nucleophile role is filled by Asp48.

It belongs to the pseudouridine synthase TruB family. Type 1 subfamily.

It carries out the reaction uridine(55) in tRNA = pseudouridine(55) in tRNA. Functionally, responsible for synthesis of pseudouridine from uracil-55 in the psi GC loop of transfer RNAs. The chain is tRNA pseudouridine synthase B from Pseudomonas putida (strain ATCC 700007 / DSM 6899 / JCM 31910 / BCRC 17059 / LMG 24140 / F1).